Here is a 75-residue protein sequence, read N- to C-terminus: Small integral membrane protein 7 (75 aa).

An N-terminal signal peptide occupies residues 1 to 17; it reads MIGDILLFGTLLMNAGA. Over 18-53 the chain is Extracellular; sequence VLNFKLKKKDTQGFGEESKEPSTGDNIREFLLSLRY. A helical transmembrane segment spans residues 54–74; that stretch reads FRIFIALWNVFMMLCMIVLFG. A topological domain (cytoplasmic) is located at residue Ser75.

This sequence belongs to the SMIM7 family.

It is found in the membrane. This is Small integral membrane protein 7 (Smim7) from Mus musculus (Mouse).